The sequence spans 219 residues: Uracil-DNA glycosylase (219 aa).

The active-site Proton acceptor is D61.

This sequence belongs to the uracil-DNA glycosylase (UDG) superfamily. UNG family.

It is found in the cytoplasm. The enzyme catalyses Hydrolyzes single-stranded DNA or mismatched double-stranded DNA and polynucleotides, releasing free uracil.. In terms of biological role, excises uracil residues from the DNA which can arise as a result of misincorporation of dUMP residues by DNA polymerase or due to deamination of cytosine. The protein is Uracil-DNA glycosylase of Haemophilus influenzae (strain PittEE).